Reading from the N-terminus, the 253-residue chain is Transcription factor ORG2 (253 aa).

The bHLH domain maps to 71 to 123 (VKKLNHNASERDRRKKINTLFSSLRSCLPASDQSKKLSIPETVSKSLKYIPEL).

In terms of assembly, homodimer. As to expression, roots.

Its subcellular location is the nucleus. The chain is Transcription factor ORG2 (ORG2) from Arabidopsis thaliana (Mouse-ear cress).